A 320-amino-acid chain; its full sequence is Lipoyl synthase (320 aa).

Residues cysteine 67, cysteine 72, cysteine 78, cysteine 93, cysteine 97, cysteine 100, and serine 307 each coordinate [4Fe-4S] cluster. One can recognise a Radical SAM core domain in the interval phenylalanine 79–glutamate 296.

Belongs to the radical SAM superfamily. Lipoyl synthase family. The cofactor is [4Fe-4S] cluster.

The protein localises to the cytoplasm. It catalyses the reaction [[Fe-S] cluster scaffold protein carrying a second [4Fe-4S](2+) cluster] + N(6)-octanoyl-L-lysyl-[protein] + 2 oxidized [2Fe-2S]-[ferredoxin] + 2 S-adenosyl-L-methionine + 4 H(+) = [[Fe-S] cluster scaffold protein] + N(6)-[(R)-dihydrolipoyl]-L-lysyl-[protein] + 4 Fe(3+) + 2 hydrogen sulfide + 2 5'-deoxyadenosine + 2 L-methionine + 2 reduced [2Fe-2S]-[ferredoxin]. The protein operates within protein modification; protein lipoylation via endogenous pathway; protein N(6)-(lipoyl)lysine from octanoyl-[acyl-carrier-protein]: step 2/2. Catalyzes the radical-mediated insertion of two sulfur atoms into the C-6 and C-8 positions of the octanoyl moiety bound to the lipoyl domains of lipoate-dependent enzymes, thereby converting the octanoylated domains into lipoylated derivatives. The sequence is that of Lipoyl synthase from Glaesserella parasuis serovar 5 (strain SH0165) (Haemophilus parasuis).